The chain runs to 257 residues: Ditrans,polycis-undecaprenyl-diphosphate synthase ((2E,6E)-farnesyl-diphosphate specific) (257 aa).

Residue aspartate 34 is part of the active site. Aspartate 34 provides a ligand contact to Mg(2+). Substrate contacts are provided by residues 35–38, tryptophan 39, arginine 47, and histidine 51; that span reads GNGR. Catalysis depends on asparagine 82, which acts as the Proton acceptor. Substrate-binding positions include tryptophan 83, arginine 85, arginine 201, and 207–209; that span reads RLS. Glutamate 220 contacts Mg(2+).

Belongs to the UPP synthase family. In terms of assembly, homodimer. Mg(2+) is required as a cofactor.

The catalysed reaction is 8 isopentenyl diphosphate + (2E,6E)-farnesyl diphosphate = di-trans,octa-cis-undecaprenyl diphosphate + 8 diphosphate. Catalyzes the sequential condensation of isopentenyl diphosphate (IPP) with (2E,6E)-farnesyl diphosphate (E,E-FPP) to yield (2Z,6Z,10Z,14Z,18Z,22Z,26Z,30Z,34E,38E)-undecaprenyl diphosphate (di-trans,octa-cis-UPP). UPP is the precursor of glycosyl carrier lipid in the biosynthesis of bacterial cell wall polysaccharide components such as peptidoglycan and lipopolysaccharide. The polypeptide is Ditrans,polycis-undecaprenyl-diphosphate synthase ((2E,6E)-farnesyl-diphosphate specific) (Francisella tularensis subsp. tularensis (strain SCHU S4 / Schu 4)).